We begin with the raw amino-acid sequence, 648 residues long: MAMEFLRSSRRILESSGCAIALIFLLFIHGAHSFYLPGVAPQDFEKGDELKVKVNKLTSIKTQLPYSYYSLPFCRPSKIVDSTENLGEVLRGDRIENAPYSFKMREAQMCNILGRVTLDAKTAKAFKEKIDDEYRVNMILDNLPLVVPIERVDQGSPSVVYQLGYHVGLKGQYEGSKEQKFFMHNHLAFTVRYHRDIQTDAARIVGFEVKPYSVKHEYEGEWSEKTRLTTCDPHTKRLVVSSATPQEVEQKKEIIFTYDVDFQESEVKWASRWDTYLLMSDNQIHWFSIVNSLMIVLFLSGMVAMIMLRTLYRDISRYNELETQEEAQEETGWKLVHGDVFRLPTNSDLLCVYVGTGVQCLGMVFVTMIFAMLGFLSPSNRGGLMTAMLLLWVFMGLFAGYASSRLYKMFKGTEWKRIAFRTAFLFPAVVSAIFFVLNALIWGQKSSGAVPFGTMFALIFLWFGISVPLVFVGGYIGFKKPAADDPVKTNKIPRQIPEQAWYMNPVFSILIGGILPFGAVFIELFFILTSIWLNQFYYIFGFLFLVFVILIVTCAEITVVLCYFQLCSEDYLWWWRSYLTSGSSALYLFLYATFYFFTKLQITKLVSAMLYFGYMLIASYAFFVLTGTIGFYACLWFTRLIYSSVKID.

The signal sequence occupies residues 1 to 33; sequence MAMEFLRSSRRILESSGCAIALIFLLFIHGAHS. At 34-285 the chain is on the lumenal side; the sequence is FYLPGVAPQD…YLLMSDNQIH (252 aa). A helical membrane pass occupies residues 286-306; the sequence is WFSIVNSLMIVLFLSGMVAMI. The Cytoplasmic portion of the chain corresponds to 307 to 355; it reads MLRTLYRDISRYNELETQEEAQEETGWKLVHGDVFRLPTNSDLLCVYVG. Residues 356-376 form a helical membrane-spanning segment; that stretch reads TGVQCLGMVFVTMIFAMLGFL. At 377 to 381 the chain is on the lumenal side; it reads SPSNR. The helical transmembrane segment at 382–402 threads the bilayer; the sequence is GGLMTAMLLLWVFMGLFAGYA. Residues 403–422 are Cytoplasmic-facing; the sequence is SSRLYKMFKGTEWKRIAFRT. The helical transmembrane segment at 423 to 443 threads the bilayer; sequence AFLFPAVVSAIFFVLNALIWG. Over 444 to 455 the chain is Lumenal; sequence QKSSGAVPFGTM. Residues 456–476 form a helical membrane-spanning segment; that stretch reads FALIFLWFGISVPLVFVGGYI. The Cytoplasmic portion of the chain corresponds to 477 to 506; it reads GFKKPAADDPVKTNKIPRQIPEQAWYMNPV. Residues 507–527 traverse the membrane as a helical segment; sequence FSILIGGILPFGAVFIELFFI. The Lumenal segment spans residues 528–538; sequence LTSIWLNQFYY. Residues 539–559 traverse the membrane as a helical segment; sequence IFGFLFLVFVILIVTCAEITV. Topologically, residues 560-577 are cytoplasmic; sequence VLCYFQLCSEDYLWWWRS. The chain crosses the membrane as a helical span at residues 578–598; it reads YLTSGSSALYLFLYATFYFFT. Residues 599–604 lie on the Lumenal side of the membrane; the sequence is KLQITK. Residues 605 to 625 traverse the membrane as a helical segment; that stretch reads LVSAMLYFGYMLIASYAFFVL. Residues 626–648 are Cytoplasmic-facing; the sequence is TGTIGFYACLWFTRLIYSSVKID. The Endoplasmic reticulum export signal signature appears at 637–642; sequence FTRLIY. The Golgi retention signal signature appears at 646–648; the sequence is KID.

It belongs to the nonaspanin (TM9SF) (TC 9.A.2) family.

Its subcellular location is the endosome membrane. The protein localises to the golgi apparatus membrane. The sequence is that of Transmembrane 9 superfamily member 8 from Arabidopsis thaliana (Mouse-ear cress).